Reading from the N-terminus, the 250-residue chain is Ferritin-2, chloroplastic (250 aa).

The transit peptide at 1 to 43 (MLLRTAAASSLSLFNPNAEPSRSVPVLANNASRLVVRAAKGST) directs the protein to the chloroplast. An extension peptide (EP) region spans residues 44 to 76 (NHRALTGVIFEPFEEVKKELDLVPTVPQASLAR). The Ferritin-like diiron domain maps to 77–230 (QKYVDESEAA…EYVAQLRRVG (154 aa)). Residues Glu94, Glu129, His132, Glu178, and Gln212 each coordinate Fe cation.

It belongs to the ferritin family. In terms of assembly, oligomer of 24 subunits. There are two types of subunits: L (light) chain and H (heavy) chain. The major chain can be light or heavy, depending on the species and tissue type. The functional molecule forms a roughly spherical shell with a diameter of 12 nm and contains a central cavity into which the insoluble mineral iron core is deposited.

Its subcellular location is the plastid. It is found in the chloroplast. It carries out the reaction 4 Fe(2+) + O2 + 4 H(+) = 4 Fe(3+) + 2 H2O. Its function is as follows. Stores iron in a soluble, non-toxic, readily available form. Important for iron homeostasis. Has ferroxidase activity. Iron is taken up in the ferrous form and deposited as ferric hydroxides after oxidation. The protein is Ferritin-2, chloroplastic (PFE2) of Vigna unguiculata (Cowpea).